We begin with the raw amino-acid sequence, 511 residues long: Mesoderm induction early response protein 1 (511 aa).

A compositionally biased stretch (low complexity) spans 1 to 16 (MAEPSVESSSPGGSAT). The interval 1–171 (MAEPSVESSS…EEESEEDEDY (171 aa)) is disordered. Residue Ser-10 is modified to Phosphoserine. The span at 17 to 36 (SEDHEFDPSADMLVHDFDDE) shows a compositional bias: basic and acidic residues. Over residues 37–46 (RTLEEEEMME) the composition is skewed to acidic residues. Over residues 57–66 (DLAREGDMPI) the composition is skewed to basic and acidic residues. Over residues 83–104 (EEEEEEEEEEEGEDDEDADNDD) the composition is skewed to acidic residues. Residues 128–143 (QSSNDDPSQSVTSQDA) are compositionally biased toward polar residues. Position 140 is a phosphoserine (Ser-140). At Tyr-154 the chain carries Phosphotyrosine. Phosphoserine is present on residues Ser-159 and Ser-165. Residues 159-171 (SEIEEESEEDEDY) show a composition bias toward acidic residues. Residues 179–277 (KEIMVGSMFQ…EALRRLRFNV (99 aa)) form the ELM2 domain. A Glycyl lysine isopeptide (Lys-Gly) (interchain with G-Cter in SUMO2) cross-link involves residue Lys-238. An SANT domain is found at 282 to 334 (EELSVWTEEECRNFEQGLKAYGKDFHLIQANKVRTRSVGECVAFYYMWKKSER). The segment at 365 to 511 (ESESAASSRA…KFEEHENTND (147 aa)) is disordered. Phosphoserine is present on residues Ser-366, Ser-368, and Ser-376. Residues 397-408 (SSRNQNGVSSNG) show a composition bias toward polar residues. 2 stretches are compositionally biased toward basic and acidic residues: residues 413–422 (LNKEEVKVEG) and 461–474 (ARNE…NERP). Lys-419 is covalently cross-linked (Glycyl lysine isopeptide (Lys-Gly) (interchain with G-Cter in SUMO2)). Positions 481 to 493 (NSSGKESPGSSEF) are enriched in polar residues. Phosphoserine is present on residues Ser-482, Ser-487, and Ser-490. The segment covering 499 to 511 (SHGKFEEHENTND) has biased composition (basic and acidic residues).

In terms of assembly, interacts with HDAC1. Part of a complex containing at least CDYL, MIER1, MIER2, HDAC1 and HDAC2. In terms of tissue distribution, ubiquitously expressed. Isoform 1 is only expressed in testis.

It is found in the nucleus. Functionally, transcriptional repressor regulating the expression of a number of genes including SP1 target genes. Probably functions through recruitment of HDAC1 a histone deacetylase involved in chromatin silencing. In Mus musculus (Mouse), this protein is Mesoderm induction early response protein 1 (Mier1).